Here is a 622-residue protein sequence, read N- to C-terminus: Low affinity potassium transport system protein Kup (622 aa).

Transmembrane regions (helical) follow at residues 9–29, 49–69, 103–123, 137–157, 165–185, 213–233, 247–267, 276–296, 337–357, 363–383, 396–416, and 419–439; these read LPAI…TSPL, VFGF…IKYL, VIMG…TPAI, PQLD…LFMI, VGKL…GLGL, VSFI…ALYA, WFTV…ALLL, PFFL…AALA, IYIP…IVSF, LAAA…ILST, FVAL…TANL, and LLSG…VMTT.

This sequence belongs to the HAK/KUP transporter (TC 2.A.72) family.

The protein localises to the cell inner membrane. The enzyme catalyses K(+)(in) + H(+)(in) = K(+)(out) + H(+)(out). Functionally, responsible for the low-affinity transport of potassium into the cell. Likely operates as a K(+):H(+) symporter. The protein is Low affinity potassium transport system protein Kup of Escherichia coli O157:H7 (strain EC4115 / EHEC).